A 444-amino-acid polypeptide reads, in one-letter code: N-succinylarginine dihydrolase (444 aa).

Substrate contacts are provided by residues 19-28 (AGLSFGNVAS), N110, and 137-138 (HR). E174 is a catalytic residue. Residue R214 participates in substrate binding. The active site involves H250. Substrate is bound by residues D252 and N362. C368 (nucleophile) is an active-site residue.

This sequence belongs to the succinylarginine dihydrolase family. Homodimer.

It carries out the reaction N(2)-succinyl-L-arginine + 2 H2O + 2 H(+) = N(2)-succinyl-L-ornithine + 2 NH4(+) + CO2. The protein operates within amino-acid degradation; L-arginine degradation via AST pathway; L-glutamate and succinate from L-arginine: step 2/5. Functionally, catalyzes the hydrolysis of N(2)-succinylarginine into N(2)-succinylornithine, ammonia and CO(2). The protein is N-succinylarginine dihydrolase of Shewanella baltica (strain OS185).